Consider the following 331-residue polypeptide: Meiotic recombination protein W68 (331 aa).

The 120-residue stretch at 1-120 (MDEFSENIER…LGILAASKGL (120 aa)) folds into the Topo IIA-type catalytic domain. Tyr81 acts as the O-(5'-phospho-DNA)-tyrosine intermediate in catalysis. Mg(2+) contacts are provided by Glu167 and Asp221.

The protein belongs to the TOP6A family. It depends on Mg(2+) as a cofactor.

The protein resides in the nucleus. The enzyme catalyses ATP-dependent breakage, passage and rejoining of double-stranded DNA.. In terms of biological role, required for meiotic recombination. Together with mei-P22, mediates DNA cleavage that forms the double-strand breaks (DSB) that initiate meiotic recombination. This chain is Meiotic recombination protein W68, found in Drosophila melanogaster (Fruit fly).